The sequence spans 352 residues: uncharacterized protein (352 aa).

Positions 1–22 are cleaved as a signal peptide; it reads MIFKKTILIFIISFFFISISFA. Over residues 25 to 47 the composition is skewed to low complexity; sequence SSSSSSSSSSSSSSWSSSESSSS. The disordered stretch occupies residues 25 to 49; sequence SSSSSSSSSSSSSSWSSSESSSSPA. N-linked (GlcNAc...) asparagine glycosylation is found at Asn76, Asn110, Asn182, Asn212, and Asn223.

It localises to the secreted. This is an uncharacterized protein from Dictyostelium discoideum (Social amoeba).